The following is a 344-amino-acid chain: Protein PopA1 (344 aa).

5 disordered regions span residues 1-28 (MSVG…NSQQ), 58-108 (SAGG…DANN), 134-156 (QPGG…AGGQ), 211-242 (GNGV…EDQG), and 268-311 (GGGN…NLQS). Composition is skewed to low complexity over residues 8–28 (SPSN…NSQQ) and 65–83 (NTGN…ANDP). Polar residues predominate over residues 89–108 (SKSQGPQSANKTGNVDDANN). Residues 138-156 (NDKGNGVGGANGAKGAGGQ) are compositionally biased toward gly residues. Residues 215–235 (NGNQANGPQNAGDVNGANGAD) are compositionally biased toward low complexity. Residues 268–279 (GGGNQAQGGSKG) show a composition bias toward gly residues. Over residues 280 to 294 (AGNASPASGANPGAN) the composition is skewed to low complexity. The segment covering 295–311 (QPGSADDQSSGQNNLQS) has biased composition (polar residues).

Post-translationally, popA2 and PopA3 are produced from PopA1.

It localises to the secreted. In terms of biological role, acts as a specific hypersensitive response (HR) elicitor. Has activity on tobacco (non-host plant) and petunia but is without activity on tomato (host plant); PopA3 seems to be more active than a PopA1-PopA2 mixture. The chain is Protein PopA1 (popA) from Ralstonia nicotianae (strain ATCC BAA-1114 / GMI1000) (Ralstonia solanacearum).